A 327-amino-acid chain; its full sequence is Fe-S cluster assembly protein DRE2 (327 aa).

A compositionally biased stretch (polar residues) spans 1-14; sequence MSPATVTIDTTPDF. Disordered regions lie at residues 1–20 and 153–179; these read MSPATVTIDTTPDFSNGGAP and NKGEGGGPVQSPAAATQPTAPAPAAAA. Residues 17 to 144 form an N-terminal SAM-like domain region; sequence GGAPHSTLLL…EKPAEEVAAV (128 aa). Positions 145 to 214 are linker; that stretch reads PLKFLKKKNK…EDELMTEEDL (70 aa). The segment covering 164 to 179 has biased composition (low complexity); sequence PAAATQPTAPAPAAAA. 4 residues coordinate [2Fe-2S] cluster: cysteine 224, cysteine 235, cysteine 238, and cysteine 240. Residues 224–240 form a fe-S binding site A region; it reads CAPKPGKKRRACKDCTC. Positions 290, 293, 301, and 304 each coordinate [4Fe-4S] cluster. 2 consecutive short sequence motifs (cx2C motif) follow at residues 290–293 and 301–304; these read CGSC and CADC. A fe-S binding site B region spans residues 290–304; sequence CGSCALGDAFRCADC.

The protein belongs to the anamorsin family. As to quaternary structure, monomer. Interacts with TAH18. Interacts with MIA40. Requires [2Fe-2S] cluster as cofactor. The cofactor is [4Fe-4S] cluster.

Its subcellular location is the cytoplasm. The protein localises to the mitochondrion intermembrane space. Its function is as follows. Component of the cytosolic iron-sulfur (Fe-S) protein assembly (CIA) machinery required for the maturation of extramitochondrial Fe-S proteins. Part of an electron transfer chain functioning in an early step of cytosolic Fe-S biogenesis, facilitating the de novo assembly of a [4Fe-4S] cluster on the scaffold complex CFD1-NBP35. Electrons are transferred to DRE2 from NADPH via the FAD- and FMN-containing protein TAH18. TAH18-DRE2 are also required for the assembly of the diferric tyrosyl radical cofactor of ribonucleotide reductase (RNR), probably by providing electrons for reduction during radical cofactor maturation in the catalytic small subunit RNR2. The chain is Fe-S cluster assembly protein DRE2 from Pyricularia oryzae (strain 70-15 / ATCC MYA-4617 / FGSC 8958) (Rice blast fungus).